The following is a 307-amino-acid chain: Methionyl-tRNA formyltransferase (307 aa).

108 to 111 provides a ligand contact to (6S)-5,6,7,8-tetrahydrofolate; it reads SLLP.

Belongs to the Fmt family.

The enzyme catalyses L-methionyl-tRNA(fMet) + (6R)-10-formyltetrahydrofolate = N-formyl-L-methionyl-tRNA(fMet) + (6S)-5,6,7,8-tetrahydrofolate + H(+). Its function is as follows. Attaches a formyl group to the free amino group of methionyl-tRNA(fMet). The formyl group appears to play a dual role in the initiator identity of N-formylmethionyl-tRNA by promoting its recognition by IF2 and preventing the misappropriation of this tRNA by the elongation apparatus. The polypeptide is Methionyl-tRNA formyltransferase (Xylella fastidiosa (strain 9a5c)).